Here is a 684-residue protein sequence, read N- to C-terminus: Glycine--tRNA ligase beta subunit (684 aa).

It belongs to the class-II aminoacyl-tRNA synthetase family. Tetramer of two alpha and two beta subunits.

The protein resides in the cytoplasm. The enzyme catalyses tRNA(Gly) + glycine + ATP = glycyl-tRNA(Gly) + AMP + diphosphate. In Pseudomonas syringae pv. tomato (strain ATCC BAA-871 / DC3000), this protein is Glycine--tRNA ligase beta subunit.